The chain runs to 276 residues: 2-dehydro-3-deoxyphosphooctonate aldolase (276 aa).

The protein belongs to the KdsA family.

Its subcellular location is the cytoplasm. It carries out the reaction D-arabinose 5-phosphate + phosphoenolpyruvate + H2O = 3-deoxy-alpha-D-manno-2-octulosonate-8-phosphate + phosphate. It participates in carbohydrate biosynthesis; 3-deoxy-D-manno-octulosonate biosynthesis; 3-deoxy-D-manno-octulosonate from D-ribulose 5-phosphate: step 2/3. It functions in the pathway bacterial outer membrane biogenesis; lipopolysaccharide biosynthesis. The protein is 2-dehydro-3-deoxyphosphooctonate aldolase of Helicobacter pylori (strain HPAG1).